A 157-amino-acid polypeptide reads, in one-letter code: Probable succinate transporter subunit YjjB (157 aa).

A run of 4 helical transmembrane segments spans residues 6–26 (FFMALMQDMILSAIPAVGFAM), 55–75 (AGFNIEWSTFMASLLVGSIGI), 87–107 (VFTVAAVIPMFPGISAYTAMI), and 129–149 (FLKASSIVGALSIGLSVPGLW).

Belongs to the ThrE exporter (TC 2.A.79) family. In terms of assembly, the transporter is composed of YjjB and YjjP.

It is found in the cell inner membrane. In terms of biological role, involved in succinate export with YjjP. Both proteins are required for export. The protein is Probable succinate transporter subunit YjjB of Salmonella arizonae (strain ATCC BAA-731 / CDC346-86 / RSK2980).